The following is a 37-amino-acid chain: Mu-agatoxin-Aa1f (37 aa).

4 disulfides stabilise this stretch: cysteine 2–cysteine 18, cysteine 9–cysteine 23, cysteine 17–cysteine 33, and cysteine 25–cysteine 31. Asparagine 37 carries the asparagine amide modification.

This sequence belongs to the neurotoxin 07 (Beta/delta-agtx) family. 03 (aga-4) subfamily. Aga sub-subfamily. In terms of tissue distribution, expressed by the venom gland.

Its subcellular location is the secreted. In terms of biological role, insecticidal neurotoxin that induces an irreversible spastic paralysis when injected into insects. Modifies presynaptic voltage-gated sodium channels (Nav), causing them to open at the normal resting potential of the nerve. This leads to spontaneous release of neurotransmitter and repetitive action potentials in motor neurons. This Agelenopsis aperta (North American funnel-web spider) protein is Mu-agatoxin-Aa1f.